A 439-amino-acid polypeptide reads, in one-letter code: tRNA-2-methylthio-N(6)-dimethylallyladenosine synthase (439 aa).

One can recognise an MTTase N-terminal domain in the interval 2-119; sequence KKLYLKTHGC…LPDLLDSVIQ (118 aa). [4Fe-4S] cluster-binding residues include Cys11, Cys48, Cys82, Cys156, Cys160, and Cys163. One can recognise a Radical SAM core domain in the interval 142–374; that stretch reads RAEGPSAFVS…QNRINAKAAE (233 aa). Positions 377 to 439 constitute a TRAM domain; that stretch reads QSMVGTQQRI…RPYSLWGEIC (63 aa).

It belongs to the methylthiotransferase family. MiaB subfamily. As to quaternary structure, monomer. [4Fe-4S] cluster serves as cofactor.

Its subcellular location is the cytoplasm. It carries out the reaction N(6)-dimethylallyladenosine(37) in tRNA + (sulfur carrier)-SH + AH2 + 2 S-adenosyl-L-methionine = 2-methylsulfanyl-N(6)-dimethylallyladenosine(37) in tRNA + (sulfur carrier)-H + 5'-deoxyadenosine + L-methionine + A + S-adenosyl-L-homocysteine + 2 H(+). In terms of biological role, catalyzes the methylthiolation of N6-(dimethylallyl)adenosine (i(6)A), leading to the formation of 2-methylthio-N6-(dimethylallyl)adenosine (ms(2)i(6)A) at position 37 in tRNAs that read codons beginning with uridine. In Coxiella burnetii (strain CbuK_Q154) (Coxiella burnetii (strain Q154)), this protein is tRNA-2-methylthio-N(6)-dimethylallyladenosine synthase.